We begin with the raw amino-acid sequence, 201 residues long: Pyridoxal 5'-phosphate synthase subunit PdxT (201 aa).

49–51 (GES) serves as a coordination point for L-glutamine. Cys81 acts as the Nucleophile in catalysis. Residues Arg110 and 139 to 140 (IR) each bind L-glutamine. Residues His180 and Glu182 each act as charge relay system in the active site.

It belongs to the glutaminase PdxT/SNO family. As to quaternary structure, in the presence of PdxS, forms a dodecamer of heterodimers. Only shows activity in the heterodimer.

It catalyses the reaction aldehydo-D-ribose 5-phosphate + D-glyceraldehyde 3-phosphate + L-glutamine = pyridoxal 5'-phosphate + L-glutamate + phosphate + 3 H2O + H(+). The enzyme catalyses L-glutamine + H2O = L-glutamate + NH4(+). It participates in cofactor biosynthesis; pyridoxal 5'-phosphate biosynthesis. Its function is as follows. Catalyzes the hydrolysis of glutamine to glutamate and ammonia as part of the biosynthesis of pyridoxal 5'-phosphate. The resulting ammonia molecule is channeled to the active site of PdxS. The polypeptide is Pyridoxal 5'-phosphate synthase subunit PdxT (Salinispora arenicola (strain CNS-205)).